Here is a 526-residue protein sequence, read N- to C-terminus: Cytochrome P450 monooxygenase BOT4 (526 aa).

The N-linked (GlcNAc...) asparagine glycan is linked to Asn5. Residues 41 to 61 (CLVAIILCRFIAVWSYNLWFH) traverse the membrane as a helical segment. 2 N-linked (GlcNAc...) asparagine glycosylation sites follow: Asn205 and Asn281. Cys464 is a heme binding site.

It belongs to the cytochrome P450 family. The cofactor is heme.

It localises to the membrane. Its pathway is secondary metabolite biosynthesis. Functionally, cytochrome P450 monooxygenase; part of the gene cluster that mediates the biosynthesis of botrydial. Botrydial is necessary for colonization of plant tissue by the T4 strain. It is a strain-dependent virulence factor since highly aggressive strains like SAS56 or B05 still retain substantial virulence when botrydial synthesis is impaired, since they produce also botcinic acid. The first step of botrydial biosynthesis is performed by the sesquiterpene synthase BOT2 which catalyzes the cyclization of farnesyl diphosphate (FPP) to presilphiperfolan-8-beta-ol (PSP). The cytochrome P450 monooxygenase BOT4 then catalyzes the hydroxylation at C-4 to give a probotryane intermediate. Acetylation of the hydroxyl at C-4 is carried out by the acetyltransferase BOT5, followed by the combined action of the P450 monooxygenases BOT3 and BOT1, to yield finally the glycol, via the regio- and stereospecific hydroxylations at C-10 and C-15 of the probotryane intermediates, respectively. The cleavage of the C10-C15 bond of probotryane skeleton is an intriguing and chemically important reaction, which could be mediated by some of the monooxygenases or by a combination of them. It is possible that either BOT3 or BOT1 would oxidize either the 10- or the 15-hydroxy group to the hydroperoxide derivative, which would then undergo heterolytic fragmentation to give the dialdehyde botrydial. Finally, the dehydrogenase BOT7 might be involved in the conversion of botrydial to dihydrobotrydial. This chain is Cytochrome P450 monooxygenase BOT4, found in Botryotinia fuckeliana (Noble rot fungus).